The following is a 528-amino-acid chain: DEAD-box ATP-dependent RNA helicase CshA (528 aa).

Residues 2–30 carry the Q motif motif; sequence TTFRELGLSDSLLQSVESMGFEEATPIQA. A Helicase ATP-binding domain is found at 33 to 203; the sequence is IPHALQGKDI…ERFMTEPQHI (171 aa). 46-53 contributes to the ATP binding site; the sequence is AQTGTGKT. Positions 151–154 match the DEAD box motif; it reads DEAD. One can recognise a Helicase C-terminal domain in the interval 214–374; the sequence is NIQQFYLEVQ…RMDAPTLDEA (161 aa). Residues 428–528 form a disordered region; that stretch reads TTPIALTSEP…RKHHSRKPQA (101 aa). The segment covering 458 to 506 has biased composition (basic and acidic residues); sequence DGNRNRSRDGRGGDGRNRDRNRDGRNRDGNRDRNREGSRDGNRGRRGEG. Residues 518-528 show a composition bias toward basic residues; sequence ERKHHSRKPQA.

This sequence belongs to the DEAD box helicase family. CshA subfamily. As to quaternary structure, oligomerizes, may be a member of the RNA degradosome.

It localises to the cytoplasm. It catalyses the reaction ATP + H2O = ADP + phosphate + H(+). In terms of biological role, DEAD-box RNA helicase possibly involved in RNA degradation. Unwinds dsRNA in both 5'- and 3'-directions, has RNA-dependent ATPase activity. In Bacillus thuringiensis (strain Al Hakam), this protein is DEAD-box ATP-dependent RNA helicase CshA.